Here is a 1002-residue protein sequence, read N- to C-terminus: Golgin subfamily A member 2 (1002 aa).

The span at 1–11 (MWPQPRLPPRP) shows a compositional bias: pro residues. An interaction with p115/USO1 region spans residues 1-84 (MWPQPRLPPR…AATLQPSDDT (84 aa)). The segment at 1–107 (MWPQPRLPPR…TSMAASQNHD (107 aa)) is disordered. The stretch at 16–892 (ETRQSKLAAA…LELQELVLRL (877 aa)) forms a coiled coil. Dimethylated arginine occurs at positions 18, 30, and 35. Residues 26–49 (KKKLREYQQRNSPGVPTGAKKKKK) carry the Nuclear localization signal motif. Phosphoserine is present on S37. Positions 52–63 (NGSNPETTTSGG) are enriched in polar residues. Position 66 is a phosphoserine (S66). Residues 95 to 105 (ASLTSMAASQN) are compositionally biased toward polar residues. A phosphoserine mark is found at S273, S438, and S690. The interval 694–724 (HPGEGDGLDREEEEDEEEEEEEAVAVPQPMP) is disordered. The segment covering 702–716 (DREEEEDEEEEEEEA) has biased composition (acidic residues). 3 positions are modified to phosphoserine: S937, S953, and S981. The interaction with GORASP1/GRASP65 stretch occupies residues 992 to 1002 (DENDEVKITVI).

This sequence belongs to the GOLGA2 family. As to quaternary structure, homodimer, may assemble into homohexamers. Homotetramer; forms a parallel homotetramer with a flexible rod-like structure that can give rise to I- and Y-shaped conformations. Interacts with GORASP1/GRASP65. The homooligomer forms a complex with GORASP1 with a 1:1 stoichiometry. Interacts with RAB1B that has been activated by GTP-binding. Interacts with p115/USO1; interaction with p115/USO1 inhibits interaction with STX5 and/or RAB1B. Interacts with STX5. Interacts with ZFPL1. Interacts with AKAP450/AKAP9; leading to recruit AKAP450/AKAP9 to the cis-Golgi. Cleaved by caspases at the onset of apoptosis. In terms of processing, methylation by PRMT5 is required for Golgi ribbon formation. While dimethylation at Arg-30 and Arg-35 are confirmed in vivo, it is unclear whether Arg-18 is methylated in vivo. Post-translationally, phosphorylated at Ser-37 by CDK1 at the onset of mitosis, inhibiting the interaction with p115/USO1 and triggering Golgi disassembly. Phosphorylated at Ser-37 in prophase as the Golgi complex starts to break down, and remains phosphorylated during further breakdown and partitioning of the Golgi fragments in metaphase and anaphase. In telophase, GM130 is dephosphorylated by PP2A as the Golgi fragments start to reassemble.

The protein resides in the golgi apparatus. Its subcellular location is the cis-Golgi network membrane. It is found in the endoplasmic reticulum-Golgi intermediate compartment membrane. It localises to the cytoplasm. The protein localises to the cytoskeleton. The protein resides in the spindle pole. In terms of biological role, peripheral membrane component of the cis-Golgi stack that acts as a membrane skeleton that maintains the structure of the Golgi apparatus, and as a vesicle thether that facilitates vesicle fusion to the Golgi membrane. Required for normal protein transport from the endoplasmic reticulum to the Golgi apparatus and the cell membrane. Together with p115/USO1 and STX5, involved in vesicle tethering and fusion at the cis-Golgi membrane to maintain the stacked and inter-connected structure of the Golgi apparatus. Plays a central role in mitotic Golgi disassembly: phosphorylation at Ser-37 by CDK1 at the onset of mitosis inhibits the interaction with p115/USO1, preventing tethering of COPI vesicles and thereby inhibiting transport through the Golgi apparatus during mitosis. Also plays a key role in spindle pole assembly and centrosome organization. Promotes the mitotic spindle pole assembly by activating the spindle assembly factor TPX2 to nucleate microtubules around the Golgi and capture them to couple mitotic membranes to the spindle: upon phosphorylation at the onset of mitosis, GOLGA2 interacts with importin-alpha via the nuclear localization signal region, leading to recruit importin-alpha to the Golgi membranes and liberate the spindle assembly factor TPX2 from importin-alpha. TPX2 then activates AURKA kinase and stimulates local microtubule nucleation. Upon filament assembly, nascent microtubules are further captured by GOLGA2, thus linking Golgi membranes to the spindle. Regulates the meiotic spindle pole assembly, probably via the same mechanism. Also regulates the centrosome organization. Also required for the Golgi ribbon formation and glycosylation of membrane and secretory proteins. This Homo sapiens (Human) protein is Golgin subfamily A member 2 (GOLGA2).